Consider the following 416-residue polypeptide: MDIGAIKGVDPEVFEIIMQEALRQQEGLELIASENTTSRAVMAAQGSVLTNKYAEGYPSKRYYGGCAMVDRAETLAIDRARELFKAEYANVQPHSGSTANMAAYFSVIKPGDTVLAMDLSHGGHLTHGSPVSFSGRLFNFVHYGLSGETEMIDMDEVAALAEKHRPKLIVAGASAYPRIIDFKAFSDIARSVNALFMVDMAHIAGLVAAGVHPSPVPHADIVTTTTHKTLRGPRGGLILSSNEIGPKISSQIFPGIQGGPLMHVIAAKAVALKEALSPSFAQYQRQVVANAATLADALMDRGMKLVSNGTDNHLMLLNLTHNGISGKDAENRLGAAGITVNKNAVPNDPRGPMITSGIRIGTPLVTTRGMGETEMDLVAELITQALEAPATAETVREKVRSLCAQFPLYKDDTTRG.

Residues Leu119 and 123–125 (GHL) contribute to the (6S)-5,6,7,8-tetrahydrofolate site. An N6-(pyridoxal phosphate)lysine modification is found at Lys228. Residue Glu243 coordinates (6S)-5,6,7,8-tetrahydrofolate.

The protein belongs to the SHMT family. Homodimer. Pyridoxal 5'-phosphate serves as cofactor.

The protein localises to the cytoplasm. The enzyme catalyses (6R)-5,10-methylene-5,6,7,8-tetrahydrofolate + glycine + H2O = (6S)-5,6,7,8-tetrahydrofolate + L-serine. Its pathway is one-carbon metabolism; tetrahydrofolate interconversion. It participates in amino-acid biosynthesis; glycine biosynthesis; glycine from L-serine: step 1/1. In terms of biological role, catalyzes the reversible interconversion of serine and glycine with tetrahydrofolate (THF) serving as the one-carbon carrier. This reaction serves as the major source of one-carbon groups required for the biosynthesis of purines, thymidylate, methionine, and other important biomolecules. Also exhibits THF-independent aldolase activity toward beta-hydroxyamino acids, producing glycine and aldehydes, via a retro-aldol mechanism. The sequence is that of Serine hydroxymethyltransferase from Desulforapulum autotrophicum (strain ATCC 43914 / DSM 3382 / VKM B-1955 / HRM2) (Desulfobacterium autotrophicum).